Consider the following 979-residue polypeptide: Pimaradiene synthase pbcA (979 aa).

The VYDTAW motif motif lies at valine 34 to tryptophan 39. The DXDD B-type cyclization motif signature appears at aspartate 328–aspartate 331. The Mg(2+) site is built by aspartate 665, glutamate 669, asparagine 865, aspartate 866, serine 869, and aspartate 873. Positions aspartate 665–glutamate 669 match the DEXXE A-type cyclization motif motif.

This sequence belongs to the terpene synthase family. It depends on Mg(2+) as a cofactor.

The catalysed reaction is (2E,6E,10E)-geranylgeranyl diphosphate = ent-copalyl diphosphate. It catalyses the reaction ent-copalyl diphosphate = ent-pimara-8(14),15-diene + diphosphate. The protein operates within secondary metabolite biosynthesis; terpenoid biosynthesis. In terms of biological role, bifunctional terpene synthase; part of the gene cluster that mediates the biosynthesis of the diterpene ent-pimara-8(14),15-diene (PD). Within the cluster, the HMG-CoA reductase AN1593 functions in the mevalonate pathway, which produces isoprenoid precursors. The geranylgeranyl pyrophosphate (GGPP) synthase AN1592 is needed in the formation of GGPP, the precursor for diterpenes. Lastly, the pimaradiene synthase pbcA performs the 2 cyclization steps that convert GGPP to ent-pimara-8(14),15-diene with ent-copalyl diphosphate as an intermediate. The putative roles of the remaining cluster enzymes in ent-pimara-8(14),15-diene biosynthesis is unclear. The cytochrome P450 monooxygenase AN1598, the glutathione S-transferase AN1595, the oxidoreductases AN1596 and AN1597 probably function as decorative enzymes. It is possible that in biological conditions the compound is oxidized to ent-pimara-8(14),15-dien-19-oic acid, which is a bioactive diterpene compound predominant in many plant extracts. In Emericella nidulans (strain FGSC A4 / ATCC 38163 / CBS 112.46 / NRRL 194 / M139) (Aspergillus nidulans), this protein is Pimaradiene synthase pbcA.